Reading from the N-terminus, the 319-residue chain is HTH-type transcriptional regulator YidZ (319 aa).

The 58-residue stretch at 8 to 65 (LDLNLLLCLQLLMQERSVTKAAKRINVTPSAVSKSLAKLRAWFDDPLFVNSPLGLSPT) folds into the HTH lysR-type domain. The H-T-H motif DNA-binding region spans 25–44 (VTKAAKRINVTPSAVSKSLA).

This sequence belongs to the LysR transcriptional regulatory family.

Involved in anaerobic NO protection. The chain is HTH-type transcriptional regulator YidZ from Escherichia coli (strain K12 / MC4100 / BW2952).